The primary structure comprises 96 residues: uncharacterized protein (96 aa).

Its subcellular location is the mitochondrion. This is an uncharacterized protein from Schizosaccharomyces pombe (strain 972 / ATCC 24843) (Fission yeast).